Reading from the N-terminus, the 463-residue chain is Glutamate--tRNA ligase (463 aa).

The 'HIGH' region motif lies at 8 to 18; that stretch reads PSPTGYLHIGG. The short motif at 236-240 is the 'KMSKS' region element; that stretch reads RLSKR. ATP is bound at residue Lys-239.

The protein belongs to the class-I aminoacyl-tRNA synthetase family. Glutamate--tRNA ligase type 1 subfamily. As to quaternary structure, monomer.

The protein localises to the cytoplasm. The enzyme catalyses tRNA(Glu) + L-glutamate + ATP = L-glutamyl-tRNA(Glu) + AMP + diphosphate. In terms of biological role, catalyzes the attachment of glutamate to tRNA(Glu) in a two-step reaction: glutamate is first activated by ATP to form Glu-AMP and then transferred to the acceptor end of tRNA(Glu). The polypeptide is Glutamate--tRNA ligase (Nitrosomonas europaea (strain ATCC 19718 / CIP 103999 / KCTC 2705 / NBRC 14298)).